A 38-amino-acid chain; its full sequence is Photosystem II reaction center protein L (38 aa).

The helical transmembrane segment at 17-37 (SLYFGLLLIFVLAVLFSSYIF) threads the bilayer.

It belongs to the PsbL family. In terms of assembly, PSII is composed of 1 copy each of membrane proteins PsbA, PsbB, PsbC, PsbD, PsbE, PsbF, PsbH, PsbI, PsbJ, PsbK, PsbL, PsbM, PsbT, PsbX, PsbY, PsbZ, Psb30/Ycf12, at least 3 peripheral proteins of the oxygen-evolving complex and a large number of cofactors. It forms dimeric complexes.

The protein localises to the plastid. It localises to the chloroplast thylakoid membrane. One of the components of the core complex of photosystem II (PSII). PSII is a light-driven water:plastoquinone oxidoreductase that uses light energy to abstract electrons from H(2)O, generating O(2) and a proton gradient subsequently used for ATP formation. It consists of a core antenna complex that captures photons, and an electron transfer chain that converts photonic excitation into a charge separation. This subunit is found at the monomer-monomer interface and is required for correct PSII assembly and/or dimerization. This chain is Photosystem II reaction center protein L, found in Chlamydomonas moewusii (Chlamydomonas eugametos).